The following is an 87-amino-acid chain: Small ribosomal subunit protein uS17 (87 aa).

This sequence belongs to the universal ribosomal protein uS17 family. Part of the 30S ribosomal subunit.

In terms of biological role, one of the primary rRNA binding proteins, it binds specifically to the 5'-end of 16S ribosomal RNA. The sequence is that of Small ribosomal subunit protein uS17 from Pelotomaculum thermopropionicum (strain DSM 13744 / JCM 10971 / SI).